A 101-amino-acid polypeptide reads, in one-letter code: NADH-quinone oxidoreductase subunit K (101 aa).

3 helical membrane-spanning segments follow: residues 4 to 24 (LGHY…GIFL), 30 to 50 (IVLL…FVAF), and 61 to 81 (VFVF…LAIL).

The protein belongs to the complex I subunit 4L family. As to quaternary structure, NDH-1 is composed of 14 different subunits. Subunits NuoA, H, J, K, L, M, N constitute the membrane sector of the complex.

Its subcellular location is the cell inner membrane. The catalysed reaction is a quinone + NADH + 5 H(+)(in) = a quinol + NAD(+) + 4 H(+)(out). Functionally, NDH-1 shuttles electrons from NADH, via FMN and iron-sulfur (Fe-S) centers, to quinones in the respiratory chain. The immediate electron acceptor for the enzyme in this species is believed to be ubiquinone. Couples the redox reaction to proton translocation (for every two electrons transferred, four hydrogen ions are translocated across the cytoplasmic membrane), and thus conserves the redox energy in a proton gradient. In Leptothrix cholodnii (strain ATCC 51168 / LMG 8142 / SP-6) (Leptothrix discophora (strain SP-6)), this protein is NADH-quinone oxidoreductase subunit K.